The chain runs to 131 residues: Profilin-11 (131 aa).

An intrachain disulfide couples cysteine 13 to cysteine 115. The Involved in PIP2 interaction motif lies at 81–97 (AVIRGKKGSGGITVKKT). At threonine 111 the chain carries Phosphothreonine.

The protein belongs to the profilin family. Occurs in many kinds of cells as a complex with monomeric actin in a 1:1 ratio. Phosphorylated by MAP kinases.

The protein localises to the cytoplasm. Its subcellular location is the cytoskeleton. Its function is as follows. Binds to actin and affects the structure of the cytoskeleton. At high concentrations, profilin prevents the polymerization of actin, whereas it enhances it at low concentrations. This chain is Profilin-11, found in Zea mays (Maize).